Reading from the N-terminus, the 703-residue chain is Polyribonucleotide nucleotidyltransferase (703 aa).

Positions 486 and 492 each coordinate Mg(2+). The region spanning 553-614 (PRITTIWIKP…AACDAAIQMI (62 aa)) is the KH domain. The 69-residue stretch at 624–692 (GKLYMGTVKK…KQGKIKLSRK (69 aa)) folds into the S1 motif domain.

The protein belongs to the polyribonucleotide nucleotidyltransferase family. Mg(2+) is required as a cofactor.

It is found in the cytoplasm. It catalyses the reaction RNA(n+1) + phosphate = RNA(n) + a ribonucleoside 5'-diphosphate. Functionally, involved in mRNA degradation. Catalyzes the phosphorolysis of single-stranded polyribonucleotides processively in the 3'- to 5'-direction. The chain is Polyribonucleotide nucleotidyltransferase from Trichlorobacter lovleyi (strain ATCC BAA-1151 / DSM 17278 / SZ) (Geobacter lovleyi).